The following is a 789-amino-acid chain: SH3 domain-containing protein 19 (789 aa).

Disordered stretches follow at residues 24–170 (TNTE…PPRL), 209–404 (DDDV…RPKP), and 472–497 (TPLDERPRGRPNDSGHSQKPVDSGAP). Position 65 is a phosphoserine (Ser-65). Residues 296–305 (SHSDRTRNPE) show a composition bias toward basic and acidic residues. The span at 335-351 (WRPPPKGAPERPPPPKL) shows a compositional bias: pro residues. The segment covering 352-361 (PASKSSNKNL) has biased composition (low complexity). Ser-368 is modified (phosphoserine). SH3 domains lie at 414 to 476 (LSVP…PLDE), 494 to 553 (SGAP…VIVD), 570 to 629 (AKGP…LVGD), 660 to 719 (PPGE…PCPA), and 729 to 788 (PKGR…FLQV). A compositionally biased stretch (basic and acidic residues) spans 474–484 (LDERPRGRPND). The disordered stretch occupies residues 635–663 (ANILSTKVPPKTKNEDPGSNSQDSSPPGE).

In terms of assembly, interacts with ADAM12. Isoform 2 (but not isoform 1) interacts with ADAM9, ADAM10, ADAM15 and ADAM17. Interacts with SH3GL1 SH3 domain. Interacts via SH3 3 and SH3 4 or SH3 4 and SH3 5 domains with SOS2. Probably forms a trimeric complex with SH3GL1 and SOS2. Interacts with SH3YL1. Expressed in hair follicles.

It is found in the cytoplasm. Functionally, may play a role in regulating A disintegrin and metalloproteases (ADAMs) in the signaling of EGFR-ligand shedding. May be involved in suppression of Ras-induced cellular transformation and Ras-mediated activation of ELK1. Plays a role in the regulation of cell morphology and cytoskeletal organization. This chain is SH3 domain-containing protein 19 (Sh3d19), found in Mus musculus (Mouse).